A 223-amino-acid chain; its full sequence is Ras-related protein Rab-37 (223 aa).

Residues 1 to 23 (MTGTPGAVATRDGEAPERSPPCS) form a disordered region. T2 carries the N-acetylthreonine modification. Residues T38, G39, V40, G41, K42, T43, C44, and T62 each contribute to the GTP site. Residue T43 participates in Mg(2+) binding. Short sequence motifs (switch) lie at residues 52-67 (GAFL…GIDF) and 85-102 (DTAG…YYRD). Positions 62 and 85 each coordinate Mg(2+). 8 residues coordinate GTP: G88, N143, K144, D146, M147, S173, A174, and K175. Residues C219 and C220 are each lipidated (S-geranylgeranyl cysteine). Residue C220 is modified to Cysteine methyl ester. Positions 221–223 (SFM) are cleaved as a propeptide — removed in mature form.

Belongs to the small GTPase superfamily. Rab family. As to quaternary structure, interacts with RIMS1. Interacts (in GDP-bound form) with RPGR, RPGR functions as guanine exchange factor (GEF). The cofactor is Mg(2+).

Its subcellular location is the cytoplasmic vesicle. The protein resides in the cell projection. The protein localises to the cilium. The enzyme catalyses GTP + H2O = GDP + phosphate + H(+). Its activity is regulated as follows. Regulated by guanine nucleotide exchange factors (GEFs) including RPGR which promote the exchange of bound GDP for free GTP. Regulated by GTPase activating proteins (GAPs) which increase the GTP hydrolysis activity. Inhibited by GDP dissociation inhibitors (GDIs). In terms of biological role, the small GTPases Rab are key regulators of intracellular membrane trafficking, from the formation of transport vesicles to their fusion with membranes. Rabs cycle between an inactive GDP-bound form and an active GTP-bound form that is able to recruit to membranes different sets of downstream effectors directly responsible for vesicle formation, movement, tethering and fusion. Acts as an organizer for autophagosome biogenesis in a GTP-dependent manner. Involved in retinal homeostasis by autophagy regulation. This is Ras-related protein Rab-37 from Homo sapiens (Human).